We begin with the raw amino-acid sequence, 512 residues long: MARAVHRSGLVALGIATALMASCAFAAKDVVVAVGSNFTTLDPYDANDTLSQAVAKSFYQGLFGLDKEMKLKNVLAESYTVSDDGITYTVKLREGIKFQDGTDFNAVAVKANLDRASDPANHLKRYNLYKNIAKTEAIDPTTVKITLKQPFSAFINILAHPATAMISPTALEKYGKEIGFHPVGTGPYELDTWNQTDFVKVKKFAGYWQPGLPKLDSITWRPVADNNTRAAMLQTGEAQFAFPIPYEQATLLEKNKNIELMASPSIMQRYISMNVTQKPFDNPKVREALNYAINRPALVKVAFAGYATPATGVVPPSIAYAQSYKPWPYDPVKARELLKEAGYPNGFSTTLWSSHNHSTAQKVLQFTQQQLAQVGIKAQVTAMDAGQRAAEVEGKGQKESGVRMFYTGWSASTGEADWALSPLFASQNWPPTLFNTAFYSNKQVDDFLAQALKTNDPAEKTRLYKAAQDIIWQESPWIPLVVEKLVSAHSKNLTGFWIMPDTGFSFEDADLQ.

The N-terminal stretch at 1–26 is a signal peptide; the sequence is MARAVHRSGLVALGIATALMASCAFA.

The protein belongs to the bacterial solute-binding protein 5 family. As to quaternary structure, the complex is composed of two ATP-binding proteins (GsiA), two transmembrane proteins (GsiC and GsiD) and a solute-binding protein (GsiB).

It is found in the periplasm. Functionally, part of the ABC transporter complex GsiABCD involved in glutathione import. Binds glutathione. The sequence is that of Glutathione-binding protein GsiB from Shigella flexneri.